The following is a 773-amino-acid chain: Linolenate 9R-lipoxygenase (773 aa).

In terms of domain architecture, Lipoxygenase spans 176 to 773 (YEWVDSKKKS…LEDLMMSINI (598 aa)). 3 residues coordinate Fe cation: His-515, His-520, and Ile-773.

This sequence belongs to the lipoxygenase family.

The catalysed reaction is (9Z,12Z,15Z)-octadecatrienoate + O2 = (9R,10E,12Z,15Z)-9-hydroperoxyoctadeca-10,12,15-trienoate. Its pathway is lipid metabolism; oxylipin biosynthesis. Functionally, catalyzes the conversion of alpha-linoleate to (9R,10E,12Z,15Z)-9-hydroperoxyoctadeca-10,12,15-trienoate in oxylipin biosynthesis. Also converts alpha-linoleate to (9R,10E,12Z)-9-hydroperoxyoctadeca-10,12-dienoate. The polypeptide is Linolenate 9R-lipoxygenase (Nostoc sp. (strain PCC 7120 / SAG 25.82 / UTEX 2576)).